The following is a 586-amino-acid chain: Heterogeneous nuclear ribonucleoprotein L (586 aa).

A compositionally biased stretch (basic residues) spans 1-16; that stretch reads MSRRLLPRAEKRRRRL. The interval 1-97 is disordered; the sequence is MSRRLLPRAE…NYDDPHKTPA (97 aa). Basic and acidic residues predominate over residues 17-27; that stretch reads EQRQQPDEQLR. The segment covering 28–37 has biased composition (low complexity); the sequence is RAGAMVKMAA. Positions 38–54 are enriched in gly residues; that stretch reads AGGGGGGGRYYGGGNEG. Residues lysine 59 and lysine 62 each participate in a glycyl lysine isopeptide (Lys-Gly) (interchain with G-Cter in SUMO2) cross-link. The segment covering 69 to 87 has biased composition (gly residues); sequence QHGGGGGGGSGAAGGGGGE. Phosphoserine is present on serine 98. In terms of domain architecture, RRM 1 spans 99–173; that stretch reads PVVHIRGLID…HPAFVNYSTS (75 aa). Lysine 133 is covalently cross-linked (Glycyl lysine isopeptide (Lys-Gly) (interchain with G-Cter in SUMO2)). Phosphoserine is present on serine 182. The region spanning 190–267 is the RRM 2 domain; sequence SVLLFTILNP…CTLKIEYAKP (78 aa). Lysine 266 bears the N6-acetyllysine mark. A compositionally biased stretch (polar residues) spans 281 to 298; that stretch reads DYTNPNLSGQGDPGSNPN. Residues 281–376 are disordered; that stretch reads DYTNPNLSGQ…PPPPDYGPHA (96 aa). A phosphoserine mark is found at serine 288 and serine 295. Lysine 299 participates in a covalent cross-link: Glycyl lysine isopeptide (Lys-Gly) (interchain with G-Cter in SUMO2). An asymmetric dimethylarginine mark is found at arginine 351 and arginine 355. Over residues 361 to 372 the composition is skewed to pro residues; the sequence is GHPPPPPPPPDY. Serine 378 bears the Phosphoserine mark. RRM domains lie at 379-476 and 492-580; these read PVLM…DFSE and RIQH…LCFS. Serine 541 is subject to Phosphoserine; by CaMK4. Lysine 565 is covalently cross-linked (Glycyl lysine isopeptide (Lys-Gly) (interchain with G-Cter in SUMO2)).

Identified in a IGF2BP1-dependent mRNP granule complex containing untranslated mRNAs. Interacts with HNRNPLL. Interacts with APEX1; the interaction is DNA-dependent. Component of a complex with SETD2. Interacts with ELAVL1. Part of a transcription inhibitory ribonucleoprotein complex composed at least of the circular RNA circZNF827, ZNF827 and HNRNPK. Interacts with CHD8 in an RNA-dependent manner. Post-translationally, phosphorylation at Ser-541 by CaMK4 enhances interaction with a CaMK4-responsive RNA element (CaRRE1), and prevents inclusion of the stress axis-regulated exon (STREX) of the KCNMA1 potassium channel transcripts upon membrane depolarization. Detected in hematopoietic cells, including lymphoid progenitor cells.

The protein localises to the nucleus. The protein resides in the nucleoplasm. It localises to the cytoplasm. Functionally, splicing factor binding to exonic or intronic sites and acting as either an activator or repressor of exon inclusion. Exhibits a binding preference for CA-rich elements. Component of the heterogeneous nuclear ribonucleoprotein (hnRNP) complexes and associated with most nascent transcripts. Associates, together with APEX1, to the negative calcium responsive element (nCaRE) B2 of the APEX2 promoter. As part of a ribonucleoprotein complex composed at least of ZNF827, HNRNPK and the circular RNA circZNF827 that nucleates the complex on chromatin, may negatively regulate the transcription of genes involved in neuronal differentiation. Regulates alternative splicing of a core group of genes involved in neuronal differentiation, likely by mediating H3K36me3-coupled transcription elongation and co-transcriptional RNA processing via interaction with CHD8. This chain is Heterogeneous nuclear ribonucleoprotein L (Hnrnpl), found in Mus musculus (Mouse).